Consider the following 402-residue polypeptide: Pyridinium-3,5-bisthiocarboxylic acid mononucleotide nickel insertion protein (402 aa).

Belongs to the LarC family.

The enzyme catalyses Ni(II)-pyridinium-3,5-bisthiocarboxylate mononucleotide = pyridinium-3,5-bisthiocarboxylate mononucleotide + Ni(2+). In terms of biological role, involved in the biosynthesis of a nickel-pincer cofactor ((SCS)Ni(II) pincer complex). Binds Ni(2+), and functions in nickel delivery to pyridinium-3,5-bisthiocarboxylic acid mononucleotide (P2TMN), to form the mature cofactor. Is thus probably required for the activation of nickel-pincer cofactor-dependent enzymes. This chain is Pyridinium-3,5-bisthiocarboxylic acid mononucleotide nickel insertion protein, found in Desulfitobacterium hafniense (strain DSM 10664 / DCB-2).